The chain runs to 808 residues: Phenylalanine--tRNA ligase beta subunit (808 aa).

The region spanning 40–157 (NKGATNVVVG…QSVEPGQDAL (118 aa)) is the tRNA-binding domain. A B5 domain is found at 411–486 (RSERVIALDL…RLYGYDELPS (76 aa)). Residues Asp464, Asp470, Glu473, and Glu474 each coordinate Mg(2+). An FDX-ACB domain is found at 714-807 (PRYPAITRDM…VQKQTGAVLR (94 aa)).

The protein belongs to the phenylalanyl-tRNA synthetase beta subunit family. Type 1 subfamily. As to quaternary structure, tetramer of two alpha and two beta subunits. Mg(2+) is required as a cofactor.

It is found in the cytoplasm. It carries out the reaction tRNA(Phe) + L-phenylalanine + ATP = L-phenylalanyl-tRNA(Phe) + AMP + diphosphate + H(+). The chain is Phenylalanine--tRNA ligase beta subunit from Shouchella clausii (strain KSM-K16) (Alkalihalobacillus clausii).